The primary structure comprises 89 residues: Dynein light chain 1, cytoplasmic (89 aa).

Belongs to the dynein light chain family. As to quaternary structure, interacts with spn-F. Forms ternary complexes with spn-F and IKKepsilon. Ubiquitous.

The protein localises to the cytoplasm. It localises to the cytoskeleton. Functionally, acts as a non-catalytic accessory component of a dynein complex. This chain is Dynein light chain 1, cytoplasmic (ctp), found in Drosophila melanogaster (Fruit fly).